We begin with the raw amino-acid sequence, 252 residues long: Zinc import ATP-binding protein ZnuC (252 aa).

In terms of domain architecture, ABC transporter spans 5–220 (VTLNKISVTF…PEFIAMFGQR (216 aa)). Residue 37–44 (GPNGAGKS) coordinates ATP.

The protein belongs to the ABC transporter superfamily. Zinc importer (TC 3.A.1.15.5) family. As to quaternary structure, the complex is composed of two ATP-binding proteins (ZnuC), two transmembrane proteins (ZnuB) and a solute-binding protein (ZnuA).

It localises to the cell inner membrane. The catalysed reaction is Zn(2+)(out) + ATP(in) + H2O(in) = Zn(2+)(in) + ADP(in) + phosphate(in) + H(+)(in). Its function is as follows. Part of the ABC transporter complex ZnuABC involved in zinc import. Responsible for energy coupling to the transport system. This is Zinc import ATP-binding protein ZnuC from Yersinia enterocolitica serotype O:8 / biotype 1B (strain NCTC 13174 / 8081).